The chain runs to 338 residues: Transcription factor AP-4 (338 aa).

The bHLH domain occupies Ile-48–Leu-99. Residues Glu-100–Leu-120 are leucine-zipper 1. Residues Gln-118–Asp-141 form a disordered region. A phosphoserine mark is found at Ser-123, Ser-124, and Ser-139. A Glycyl lysine isopeptide (Lys-Gly) (interchain with G-Cter in SUMO2) cross-link involves residue Lys-147. The tract at residues Leu-151 to Leu-179 is leucine-zipper 2. Glycyl lysine isopeptide (Lys-Gly) (interchain with G-Cter in SUMO2) cross-links involve residues Lys-187, Lys-189, and Lys-285. Positions Gln-283–Arg-294 are enriched in basic and acidic residues. The disordered stretch occupies residues Gln-283–Pro-338.

As to quaternary structure, efficient DNA binding requires dimerization with another bHLH protein. Homodimer.

Its subcellular location is the nucleus. Functionally, transcription factor that activates both viral and cellular genes by binding to the symmetrical DNA sequence 5'-CAGCTG-3'. The protein is Transcription factor AP-4 (TFAP4) of Homo sapiens (Human).